The primary structure comprises 90 residues: Small ribosomal subunit protein uS15c (90 aa).

This sequence belongs to the universal ribosomal protein uS15 family. As to quaternary structure, part of the 30S ribosomal subunit.

The protein resides in the plastid. Its subcellular location is the chloroplast. The sequence is that of Small ribosomal subunit protein uS15c (rps15) from Populus alba (White poplar).